Reading from the N-terminus, the 46-residue chain is Major urinary protein (46 aa).

A glycan (N-linked (GlcNAc...) asparagine) is linked at Asn-15.

This sequence belongs to the calycin superfamily. Lipocalin family. Found in many tissues including liver, urine, preputial gland, clitoral gland, submandibular gland and salivary gland.

The protein localises to the secreted. In terms of biological role, binds pheromones that are released from drying urine of males. These pheromones affect the sexual behavior of females. Acts as a shuttle for pheromonal communication between individuals of the same species. The polypeptide is Major urinary protein (Rattus rattus (Black rat)).